The following is a 168-amino-acid chain: Protein DESIGUAL 2 (168 aa).

An N-terminal signal peptide occupies residues 1 to 20; it reads MARNVGFFICILILAMDVSA. A run of 3 helical transmembrane segments spans residues 56–76, 94–114, and 133–153; these read LAACILLVLAHVTANFLGGCL, AVASLIFTWIILAIAFSMLIV, and VLSIGGILCFVHGLFAVAYYI.

This sequence belongs to the DESIGUAL family. Mainly expressed in roots, inflorescences and developing leaves, and, at low levels, in mature leaves.

The protein localises to the endoplasmic reticulum membrane. Functionally, involved, partially redundantly with VCC/DEAL1 and DEAL3, to ensure bilateral symmetry development and early leaf margin patterning, probably via the regulation of auxin and CUC2 distribution. The protein is Protein DESIGUAL 2 of Arabidopsis thaliana (Mouse-ear cress).